A 360-amino-acid chain; its full sequence is Threonine synthase (360 aa).

Lysine 69 carries the post-translational modification N6-(pyridoxal phosphate)lysine. Residues asparagine 95, 196 to 200, and threonine 326 each bind pyridoxal 5'-phosphate; that span reads GNAGN.

This sequence belongs to the threonine synthase family. In terms of assembly, homodimer. Pyridoxal 5'-phosphate is required as a cofactor.

The catalysed reaction is O-phospho-L-homoserine + H2O = L-threonine + phosphate. It functions in the pathway amino-acid biosynthesis; L-threonine biosynthesis; L-threonine from L-aspartate: step 5/5. Its function is as follows. Catalyzes the gamma-elimination of phosphate from L-phosphohomoserine and the beta-addition of water to produce L-threonine. This Mycobacterium leprae (strain TN) protein is Threonine synthase (thrC).